The chain runs to 348 residues: Heat-inducible transcription repressor HrcA (348 aa).

It belongs to the HrcA family.

Its function is as follows. Negative regulator of class I heat shock genes (grpE-dnaK-dnaJ and groELS operons). Prevents heat-shock induction of these operons. This chain is Heat-inducible transcription repressor HrcA, found in Pelotomaculum thermopropionicum (strain DSM 13744 / JCM 10971 / SI).